The following is a 365-amino-acid chain: Isopentenyl-diphosphate delta-isomerase (365 aa).

Residue 8–9 (RK) coordinates substrate. Residues 67-69 (SIT), Ser-97, and Asn-126 contribute to the FMN site. Residue 97-99 (SQR) coordinates substrate. Gln-160 contacts substrate. Glu-161 lines the Mg(2+) pocket. FMN contacts are provided by residues Lys-192, Thr-222, 272–274 (GIR), and 293–294 (AL).

Belongs to the IPP isomerase type 2 family. Homooctamer. Dimer of tetramers. FMN is required as a cofactor. It depends on NADPH as a cofactor. Mg(2+) serves as cofactor.

The protein localises to the cytoplasm. It catalyses the reaction isopentenyl diphosphate = dimethylallyl diphosphate. In terms of biological role, involved in the biosynthesis of isoprenoids. Catalyzes the 1,3-allylic rearrangement of the homoallylic substrate isopentenyl (IPP) to its allylic isomer, dimethylallyl diphosphate (DMAPP). This is Isopentenyl-diphosphate delta-isomerase from Methanosarcina barkeri (strain Fusaro / DSM 804).